A 156-amino-acid polypeptide reads, in one-letter code: Cyclic pyranopterin monophosphate synthase (156 aa).

Residues 73-75 (LCH) and 110-111 (ME) contribute to the substrate site. The active site involves aspartate 125.

The protein belongs to the MoaC family. As to quaternary structure, homohexamer; trimer of dimers.

The enzyme catalyses (8S)-3',8-cyclo-7,8-dihydroguanosine 5'-triphosphate = cyclic pyranopterin phosphate + diphosphate. Its pathway is cofactor biosynthesis; molybdopterin biosynthesis. Functionally, catalyzes the conversion of (8S)-3',8-cyclo-7,8-dihydroguanosine 5'-triphosphate to cyclic pyranopterin monophosphate (cPMP). This is Cyclic pyranopterin monophosphate synthase from Pseudomonas putida (strain GB-1).